Here is a 229-residue protein sequence, read N- to C-terminus: GTP cyclohydrolase 1 (229 aa).

Zn(2+) is bound by residues C116, H119, and C187.

It belongs to the GTP cyclohydrolase I family. As to quaternary structure, toroid-shaped homodecamer, composed of two pentamers of five dimers.

The catalysed reaction is GTP + H2O = 7,8-dihydroneopterin 3'-triphosphate + formate + H(+). It participates in cofactor biosynthesis; 7,8-dihydroneopterin triphosphate biosynthesis; 7,8-dihydroneopterin triphosphate from GTP: step 1/1. The polypeptide is GTP cyclohydrolase 1 (Synechococcus sp. (strain JA-3-3Ab) (Cyanobacteria bacterium Yellowstone A-Prime)).